Reading from the N-terminus, the 132-residue chain is Large ribosomal subunit protein uL14 (132 aa).

The protein belongs to the universal ribosomal protein uL14 family. Part of the 50S ribosomal subunit. Forms a cluster with proteins L3 and L24e, part of which may contact the 16S rRNA in 2 intersubunit bridges.

Binds to 23S rRNA. Forms part of two intersubunit bridges in the 70S ribosome. This Methanosarcina barkeri (strain Fusaro / DSM 804) protein is Large ribosomal subunit protein uL14.